A 1131-amino-acid polypeptide reads, in one-letter code: Tyrosine-protein kinase JAK2 (1131 aa).

An interaction with cytokine/interferon/growth hormone receptors region spans residues 1–239; that stretch reads MGMACLTMTE…RYRFRRFIEQ (239 aa). The FERM domain maps to 37-380; the sequence is PVLQVYLYHS…GYYRLTADAH (344 aa). Tyr119 carries the post-translational modification Phosphotyrosine; by autocatalysis. Residues Tyr372 and Tyr373 each carry the phosphotyrosine modification. Residues 401–482 form the SH2; atypical domain; that stretch reads HGPISMDFAI…NLKDLLNCYQ (82 aa). Ser523 carries the post-translational modification Phosphoserine. One can recognise a Protein kinase 1 domain in the interval 545–809; it reads LIFNESLGQG…AIIRDLNSLF (265 aa). Residues Tyr570 and Tyr813 each carry the phosphotyrosine modification. Residues 849-1126 enclose the Protein kinase 2 domain; that stretch reads LKFLQQLGKG…RDLALRVDQI (278 aa). 855-863 is an ATP binding site; the sequence is LGKGNFGSV. Tyr868 carries the post-translational modification Phosphotyrosine; by autocatalysis. Position 882 (Lys882) interacts with ATP. Tyr966 and Tyr972 each carry phosphotyrosine; by autocatalysis. Catalysis depends on Asp976, which acts as the Proton acceptor. Tyr1007 and Tyr1008 each carry phosphotyrosine; by autocatalysis.

The protein belongs to the protein kinase superfamily. Tyr protein kinase family. JAK subfamily. As to quaternary structure, interacts with IL23R, SKB1 and STAM2. Interacts with EPOR. Interacts with LYN. Interacts with SIRPA. Interacts with SH2B1. Interacts with TEC. Interacts with IFNGR2 (via intracellular domain). Interacts with LEPR (Isoform B). Interacts with HSP90AB1; promotes functional activation in a heat shock-dependent manner. Interacts with STRA6. Interacts with ASB2; the interaction targets JAK2 for Notch-induced proteasomal degradation. Requires Mg(2+) as cofactor. Post-translationally, autophosphorylated, leading to regulate its activity. Leptin promotes phosphorylation on tyrosine residues, including phosphorylation on Tyr-813. Autophosphorylation on Tyr-119 in response to EPO down-regulates its kinase activity. Autophosphorylation on Tyr-868, Tyr-966 and Tyr-972 in response to growth hormone (GH) are required for maximal kinase activity. Also phosphorylated by TEC. Phosphorylated on tyrosine residues in response to interferon gamma signaling. Phosphorylated on tyrosine residues in response to a signaling cascade that is activated by increased cellular retinol. Undergoes Notch-induced ubiquitination and subsequent proteasomal degradation which is mediated by ASB1 or ASB2, the substrate-recognition components of probable ECS E3 ubiquitin-protein ligase complexes.

The protein resides in the endomembrane system. Its subcellular location is the cytoplasm. The protein localises to the nucleus. It carries out the reaction L-tyrosyl-[protein] + ATP = O-phospho-L-tyrosyl-[protein] + ADP + H(+). Regulated by autophosphorylation, can both activate or decrease activity. Heme regulates its activity by enhancing the phosphorylation on Tyr-1007 and Tyr-1008. Its function is as follows. Non-receptor tyrosine kinase involved in various processes such as cell growth, development, differentiation or histone modifications. Mediates essential signaling events in both innate and adaptive immunity. In the cytoplasm, plays a pivotal role in signal transduction via its association with type I receptors such as growth hormone (GHR), prolactin (PRLR), leptin (LEPR), erythropoietin (EPOR), thrombopoietin (THPO); or type II receptors including IFN-alpha, IFN-beta, IFN-gamma and multiple interleukins. Following ligand-binding to cell surface receptors, phosphorylates specific tyrosine residues on the cytoplasmic tails of the receptor, creating docking sites for STATs proteins. Subsequently, phosphorylates the STATs proteins once they are recruited to the receptor. Phosphorylated STATs then form homodimer or heterodimers and translocate to the nucleus to activate gene transcription. For example, cell stimulation with erythropoietin (EPO) during erythropoiesis leads to JAK2 autophosphorylation, activation, and its association with erythropoietin receptor (EPOR) that becomes phosphorylated in its cytoplasmic domain. Then, STAT5 (STAT5A or STAT5B) is recruited, phosphorylated and activated by JAK2. Once activated, dimerized STAT5 translocates into the nucleus and promotes the transcription of several essential genes involved in the modulation of erythropoiesis. Part of a signaling cascade that is activated by increased cellular retinol and that leads to the activation of STAT5 (STAT5A or STAT5B). In addition, JAK2 mediates angiotensin-2-induced ARHGEF1 phosphorylation. Plays a role in cell cycle by phosphorylating CDKN1B. Cooperates with TEC through reciprocal phosphorylation to mediate cytokine-driven activation of FOS transcription. In the nucleus, plays a key role in chromatin by specifically mediating phosphorylation of 'Tyr-41' of histone H3 (H3Y41ph), a specific tag that promotes exclusion of CBX5 (HP1 alpha) from chromatin. Up-regulates the potassium voltage-gated channel activity of KCNA3. In Sus scrofa (Pig), this protein is Tyrosine-protein kinase JAK2.